We begin with the raw amino-acid sequence, 486 residues long: Glycogen synthase (486 aa).

An ADP-alpha-D-glucose-binding site is contributed by K15.

Belongs to the glycosyltransferase 1 family. Bacterial/plant glycogen synthase subfamily.

The enzyme catalyses [(1-&gt;4)-alpha-D-glucosyl](n) + ADP-alpha-D-glucose = [(1-&gt;4)-alpha-D-glucosyl](n+1) + ADP + H(+). Its pathway is glycan biosynthesis; glycogen biosynthesis. Its function is as follows. Synthesizes alpha-1,4-glucan chains using ADP-glucose. The protein is Glycogen synthase of Thermotoga maritima (strain ATCC 43589 / DSM 3109 / JCM 10099 / NBRC 100826 / MSB8).